A 558-amino-acid chain; its full sequence is Formate--tetrahydrofolate ligase (558 aa).

Residue 66 to 73 participates in ATP binding; the sequence is TPAGEGKT.

Belongs to the formate--tetrahydrofolate ligase family.

It carries out the reaction (6S)-5,6,7,8-tetrahydrofolate + formate + ATP = (6R)-10-formyltetrahydrofolate + ADP + phosphate. It functions in the pathway one-carbon metabolism; tetrahydrofolate interconversion. The protein is Formate--tetrahydrofolate ligase of Neisseria gonorrhoeae (strain ATCC 700825 / FA 1090).